The chain runs to 485 residues: Argininosuccinate lyase (485 aa).

It belongs to the lyase 1 family. Argininosuccinate lyase subfamily.

The protein resides in the cytoplasm. It catalyses the reaction 2-(N(omega)-L-arginino)succinate = fumarate + L-arginine. It participates in amino-acid biosynthesis; L-arginine biosynthesis; L-arginine from L-ornithine and carbamoyl phosphate: step 3/3. In Paracidovorax citrulli (strain AAC00-1) (Acidovorax citrulli), this protein is Argininosuccinate lyase.